Consider the following 367-residue polypeptide: Alginate lyase (367 aa).

The signal sequence occupies residues Met-1 to Ala-27. Residues Ser-65–Lys-66, His-138–Thr-139, and Tyr-256 contribute to the substrate site.

It belongs to the polysaccharide lyase 5 family.

Its subcellular location is the periplasm. The enzyme catalyses Eliminative cleavage of alginate to give oligosaccharides with 4-deoxy-alpha-L-erythro-hex-4-enuronosyl groups at their non-reducing ends and beta-D-mannuronate at their reducing end.. In terms of biological role, catalyzes the depolymerization of alginate by cleaving the beta-1,4 glycosidic bond between two adjacent sugar residues via a beta-elimination mechanism. May serve to degrade mislocalized alginate that is trapped in the periplasmic space. The sequence is that of Alginate lyase from Pseudomonas paraeruginosa (strain DSM 24068 / PA7) (Pseudomonas aeruginosa (strain PA7)).